Here is an 854-residue protein sequence, read N- to C-terminus: Golgin subfamily A member 6-like protein 22 (854 aa).

6 disordered regions span residues 1-114 (MLMW…HQEA), 320-348 (QEEKIREQEEKMRRQEEMMWEKEEKMRRQ), 366-447 (MHEQ…MWRQ), 481-568 (QEEK…MWRQ), 581-681 (RQEE…EQEE), and 714-854 (QEEK…MQEH). Residues 15–35 (LPTHPHLPTHPHLPTHPHLPT) show a composition bias toward basic residues. Residues 45–66 (MSKETRQSKLAEAKEQLTDHHP) show a composition bias toward basic and acidic residues. Polar residues-rich tracts occupy residues 67–77 (QTNPSVGTAAS) and 85–97 (NNGTSPETTTSGG). The segment covering 100–114 (SPEDEQKASHQHQEA) has biased composition (basic and acidic residues). Residues 103-854 (DEQKASHQHQ…RQQEEKMQEH (752 aa)) adopt a coiled-coil conformation.

It belongs to the GOLGA6 family.

In Homo sapiens (Human), this protein is Golgin subfamily A member 6-like protein 22.